The sequence spans 1256 residues: Bifunctional autolysin (1256 aa).

The first 29 residues, 1–29 (MAKKFNYKLPSMVALTLVGSAVTAHQVQA), serve as a signal peptide directing secretion. A compositionally biased stretch (polar residues) spans 103 to 138 (GDTRANQSATTNNTQPVAKSTSTTAPKTNTNVTNAG). 3 disordered regions span residues 103 to 151 (GDTR…NSEN), 172 to 214 (KTAA…KTSL), and 419 to 440 (TQST…PSTG). Composition is skewed to low complexity over residues 172 to 196 (KTAA…KVTT) and 421 to 439 (STTT…KPST). The interval 199 to 775 (ASAQPRSVAA…AVAQPKTAVK (577 aa)) is N-acetylmuramoyl-L-alanine amidase. GW domains lie at 443-517 (TVAA…YNTA), 519-593 (SPVN…DTAK), 612-686 (TVSS…YNNA), 688-762 (SPVN…VPAA), 784-859 (TTQT…VQNL), 861-936 (KEVK…APTA), and 943-1017 (AAKD…KELI). The segment at 776–1256 (AYTVTKPQTT…GKYFDIPQYK (481 aa)) is endo-beta-N-acetylglucosaminidase.

The protein in the N-terminal section; belongs to the N-acetylmuramoyl-L-alanine amidase 2 family. In the C-terminal section; belongs to the glycosyl hydrolase 73 family. Oligomer; forms a ring structure at the cell surface which is important for efficient partitioning of daughter cells after cell division. Undergoes proteolytic processing to generate the two extracellular lytic enzymes, probably at the septal region on the cell surface.

It localises to the secreted. The catalysed reaction is Hydrolyzes the link between N-acetylmuramoyl residues and L-amino acid residues in certain cell-wall glycopeptides.. The enzyme catalyses an N(4)-(oligosaccharide-(1-&gt;3)-[oligosaccharide-(1-&gt;6)]-beta-D-Man-(1-&gt;4)-beta-D-GlcNAc-(1-&gt;4)-alpha-D-GlcNAc)-L-asparaginyl-[protein] + H2O = an oligosaccharide-(1-&gt;3)-[oligosaccharide-(1-&gt;6)]-beta-D-Man-(1-&gt;4)-D-GlcNAc + N(4)-(N-acetyl-beta-D-glucosaminyl)-L-asparaginyl-[protein]. Functionally, endohydrolysis of the di-N-acetylchitobiosyl unit in high-mannose glycopeptides and glycoproteins containing the -[(Man)5(GlcNAc)2]-Asn structure. One N-acetyl-D-glucosamine residue remains attached to the protein; the rest of the oligosaccharide is released intact. Cleaves the peptidoglycan connecting the daughter cells at the end of the cell division cycle, resulting in the separation of the two newly divided cells. Acts as an autolysin in penicillin-induced lysis. This Staphylococcus aureus (strain NCTC 8325 / PS 47) protein is Bifunctional autolysin (atl).